Reading from the N-terminus, the 137-residue chain is Large ribosomal subunit protein uL16 (137 aa).

Residues 1–20 (MLQPKRTKFRKQQKMRNRGL) are disordered.

This sequence belongs to the universal ribosomal protein uL16 family. Part of the 50S ribosomal subunit.

Binds 23S rRNA and is also seen to make contacts with the A and possibly P site tRNAs. This Francisella philomiragia subsp. philomiragia (strain ATCC 25017 / CCUG 19701 / FSC 153 / O#319-036) protein is Large ribosomal subunit protein uL16.